Here is a 351-residue protein sequence, read N- to C-terminus: Photosystem II D2 protein (351 aa).

The helical transmembrane segment at 39-59 (TAYLAVGGWFTGTTFVTSWYT) threads the bilayer. Position 116 (histidine 116) interacts with chlorophyll a. A helical transmembrane segment spans residues 123–139 (GFCLRQFEIARLVGIRP). 2 residues coordinate pheophytin a: glutamine 128 and asparagine 141. The chain crosses the membrane as a helical span at residues 151 to 164 (IFVSVFLLYPLGQA). Residue histidine 196 participates in chlorophyll a binding. A helical membrane pass occupies residues 206-226 (GALLCAIHGATVENTLFEDGD). 2 residues coordinate a plastoquinone: histidine 213 and phenylalanine 260. Position 213 (histidine 213) interacts with Fe cation. Histidine 267 contacts Fe cation. A helical membrane pass occupies residues 277–293 (GLWTSAIGIVGLALNLR).

It belongs to the reaction center PufL/M/PsbA/D family. As to quaternary structure, PSII is composed of 1 copy each of membrane proteins PsbA, PsbB, PsbC, PsbD, PsbE, PsbF, PsbH, PsbI, PsbJ, PsbK, PsbL, PsbM, PsbT, PsbX, PsbY, PsbZ, Psb30/Ycf12, at least 3 peripheral proteins of the oxygen-evolving complex and a large number of cofactors. It forms dimeric complexes. The cofactor is The D1/D2 heterodimer binds P680, chlorophylls that are the primary electron donor of PSII, and subsequent electron acceptors. It shares a non-heme iron and each subunit binds pheophytin, quinone, additional chlorophylls, carotenoids and lipids. There is also a Cl(-1) ion associated with D1 and D2, which is required for oxygen evolution. The PSII complex binds additional chlorophylls, carotenoids and specific lipids..

Its subcellular location is the plastid. The protein localises to the chloroplast thylakoid membrane. It catalyses the reaction 2 a plastoquinone + 4 hnu + 2 H2O = 2 a plastoquinol + O2. Functionally, photosystem II (PSII) is a light-driven water:plastoquinone oxidoreductase that uses light energy to abstract electrons from H(2)O, generating O(2) and a proton gradient subsequently used for ATP formation. It consists of a core antenna complex that captures photons, and an electron transfer chain that converts photonic excitation into a charge separation. The D1/D2 (PsbA/PsbD) reaction center heterodimer binds P680, the primary electron donor of PSII as well as several subsequent electron acceptors. D2 is needed for assembly of a stable PSII complex. This chain is Photosystem II D2 protein, found in Heterosigma akashiwo (strain NIES-293 / 8280G21-1).